The sequence spans 475 residues: Ribulose bisphosphate carboxylase large chain (475 aa).

A propeptide spanning residues 1–2 (MS) is cleaved from the precursor. The residue at position 3 (Pro-3) is an N-acetylproline. Lys-14 is modified (N6,N6,N6-trimethyllysine). Substrate-binding residues include Asn-123 and Thr-173. The active-site Proton acceptor is the Lys-175. Lys-177 provides a ligand contact to substrate. Lys-201, Asp-203, and Glu-204 together coordinate Mg(2+). The residue at position 201 (Lys-201) is an N6-carboxylysine. The active-site Proton acceptor is the His-294. Substrate contacts are provided by Arg-295, His-327, and Ser-379.

The protein belongs to the RuBisCO large chain family. Type I subfamily. Heterohexadecamer of 8 large chains and 8 small chains; disulfide-linked. The disulfide link is formed within the large subunit homodimers. Requires Mg(2+) as cofactor. In terms of processing, the disulfide bond which can form in the large chain dimeric partners within the hexadecamer appears to be associated with oxidative stress and protein turnover.

The protein resides in the plastid. It localises to the chloroplast. The enzyme catalyses 2 (2R)-3-phosphoglycerate + 2 H(+) = D-ribulose 1,5-bisphosphate + CO2 + H2O. It carries out the reaction D-ribulose 1,5-bisphosphate + O2 = 2-phosphoglycolate + (2R)-3-phosphoglycerate + 2 H(+). Its function is as follows. RuBisCO catalyzes two reactions: the carboxylation of D-ribulose 1,5-bisphosphate, the primary event in carbon dioxide fixation, as well as the oxidative fragmentation of the pentose substrate in the photorespiration process. Both reactions occur simultaneously and in competition at the same active site. The polypeptide is Ribulose bisphosphate carboxylase large chain (Physcomitrium patens (Spreading-leaved earth moss)).